A 350-amino-acid chain; its full sequence is Ribosomal RNA large subunit methyltransferase Cfr (350 aa).

Glu-92 (proton acceptor) is an active-site residue. The Radical SAM core domain maps to 99 to 333 (EAGWESFCIS…VTIRSQFGRE (235 aa)). Cys-106 and Cys-338 are joined by a disulfide. [4Fe-4S] cluster is bound by residues Cys-113, Cys-117, and Cys-120. Residues 159 to 160 (GE), Ser-190, 213 to 215 (SLH), and Asn-293 contribute to the S-adenosyl-L-methionine site. Cys-338 serves as the catalytic S-methylcysteine intermediate.

The protein belongs to the radical SAM superfamily. RlmN family. Cfr subfamily. [4Fe-4S] cluster is required as a cofactor.

Its subcellular location is the cytoplasm. It carries out the reaction adenosine(2503) in 23S rRNA + 2 reduced [2Fe-2S]-[ferredoxin] + 2 S-adenosyl-L-methionine = 8-methyladenosine(2503) in 23S rRNA + 5'-deoxyadenosine + L-methionine + 2 oxidized [2Fe-2S]-[ferredoxin] + S-adenosyl-L-homocysteine. Its function is as follows. Specifically methylates position 8 of adenine 2503 in 23S rRNA. Confers resistance to some classes of antibiotics. The polypeptide is Ribosomal RNA large subunit methyltransferase Cfr (Shouchella clausii (strain KSM-K16) (Alkalihalobacillus clausii)).